We begin with the raw amino-acid sequence, 266 residues long: Chymotrypsin-like elastase family member 1 (266 aa).

The signal sequence occupies residues 1–16; sequence MLRFLVLATLVLYGHS. Residues 17 to 26 constitute a propeptide, activation peptide; it reads TRDFPETNAR. Residues 27–264 enclose the Peptidase S1 domain; that stretch reads VVGGTEARKN…YISWINNVIA (238 aa). An intrachain disulfide couples Cys-56 to Cys-72. The Charge relay system role is filled by His-71. Ca(2+) contacts are provided by Glu-85, Asn-87, Gln-90, and Glu-95. An N-linked (GlcNAc...) asparagine glycan is attached at Asn-87. The active-site Charge relay system is the Asp-119. Intrachain disulfides connect Cys-153/Cys-220, Cys-184/Cys-200, and Cys-210/Cys-240. The active-site Charge relay system is Ser-214. Residue Asn-241 is glycosylated (N-linked (GlcNAc...) asparagine).

Belongs to the peptidase S1 family. Elastase subfamily. Ca(2+) serves as cofactor.

Its subcellular location is the secreted. The catalysed reaction is Hydrolysis of proteins, including elastin. Preferential cleavage: Ala-|-Xaa.. In terms of biological role, serine proteases that hydrolyze many proteins in addition to elastin. This chain is Chymotrypsin-like elastase family member 1 (CELA1), found in Felis catus (Cat).